We begin with the raw amino-acid sequence, 208 residues long: Uracil phosphoribosyltransferase (208 aa).

5-phospho-alpha-D-ribose 1-diphosphate is bound by residues R78, R103, and 130–138; that span reads DPMLATGGT. Residues I193 and 198–200 contribute to the uracil site; that span reads GDA. 5-phospho-alpha-D-ribose 1-diphosphate is bound at residue D199.

The protein belongs to the UPRTase family. Requires Mg(2+) as cofactor.

It carries out the reaction UMP + diphosphate = 5-phospho-alpha-D-ribose 1-diphosphate + uracil. Its pathway is pyrimidine metabolism; UMP biosynthesis via salvage pathway; UMP from uracil: step 1/1. Allosterically activated by GTP. In terms of biological role, catalyzes the conversion of uracil and 5-phospho-alpha-D-ribose 1-diphosphate (PRPP) to UMP and diphosphate. The chain is Uracil phosphoribosyltransferase from Maridesulfovibrio salexigens (strain ATCC 14822 / DSM 2638 / NCIMB 8403 / VKM B-1763) (Desulfovibrio salexigens).